The sequence spans 414 residues: Mannan endo-1,4-beta-mannosidase 2 (414 aa).

Residues 1-25 form the signal peptide; sequence MAYFQRLISCIFVLFLLSLAFACEA. Positions 95 and 210 each coordinate substrate. The active-site Proton donor is Glu211. Substrate is bound at residue Tyr288. Glu328 serves as the catalytic Nucleophile. Substrate is bound at residue Trp370.

It belongs to the glycosyl hydrolase 5 (cellulase A) family.

The protein resides in the secreted. It catalyses the reaction Random hydrolysis of (1-&gt;4)-beta-D-mannosidic linkages in mannans, galactomannans and glucomannans.. Its function is as follows. Possesses endo-beta-mannanase activity in vitro. May be involved in seed germination by weakening the endosperm cap prior to radicle emergence. This chain is Mannan endo-1,4-beta-mannosidase 2 (MAN2), found in Solanum lycopersicum (Tomato).